We begin with the raw amino-acid sequence, 557 residues long: D-arabinono-1,4-lactone oxidase (557 aa).

The region spanning 25–209 (FLCKPQAIFQ…THVTLRTCPK (185 aa)) is the FAD-binding PCMH-type domain. FAD is bound by residues 58–61 (VGSG), 62–63 (HS), 144–148 (ISTGT), Ile199, and 543–546 (LSGK). A Pros-8alpha-FAD histidine modification is found at His62.

It belongs to the oxygen-dependent FAD-linked oxidoreductase family. It depends on FAD as a cofactor.

It catalyses the reaction D-arabinono-1,4-lactone + O2 = dehydro-D-arabinono-1,4-lactone + H2O2 + H(+). The catalysed reaction is L-galactono-1,4-lactone + O2 = L-ascorbate + H2O2 + H(+). The enzyme catalyses L-gulono-1,4-lactone + O2 = L-ascorbate + H2O2 + H(+). It carries out the reaction L-xylono-1,4-lactone + O2 = dehydro-L-arabinono-1,4-lactone + H2O2 + H(+). It functions in the pathway cofactor biosynthesis; D-erythroascorbate biosynthesis; dehydro-D-arabinono-1,4-lactone from D-arabinose: step 2/2. Functionally, D-arabinono-1,4-lactone oxidase that catalyzes the final step of biosynthesis of D-erythroascorbic acid, an important antioxidant and one of the virulence factors enhancing the pathogenicity. Is also able to oxidize L-galactono-1,4-lactone, L-xylono-1,4-lactone and L-gulono-1,4-lactone. The sequence is that of D-arabinono-1,4-lactone oxidase from Candida albicans (strain SC5314 / ATCC MYA-2876) (Yeast).